The sequence spans 163 residues: SDDYVKARVMFKEEQISEFKMAFDMFDEDGGGDISTKELGTIMKRLGMSISREELQQMIDEVDEDASGTIDFEEFLEMMARAMQDSEREIPDDELRAAFRVLDKNGDGFIDKDEFRALASECAGDDLTDDELLEFMMDYDGNRDGRFDYEEWKEIIQELKVRW.

Ser1 carries the N-acetylserine modification. 4 consecutive EF-hand domains span residues 14–49, 50–85, 90–125, and 127–162; these read EQIS…LGMS, ISRE…AMQD, IPDD…CAGD, and LTDD…LKVR. Lys20 carries the post-translational modification N6,N6-dimethyllysine; alternate. Lys20 carries the post-translational modification N6-methyllysine; alternate. Residues Asp27, Asp29, Asp33, Glu38, Asp63, Asp65, Ser67, Thr69, Glu74, Asp103, Asn105, Asp107, and Glu114 each contribute to the Ca(2+) site.

Belongs to the troponin C family.

Troponin is the central regulatory protein of striated muscle contraction. Tn consists of three components: Tn-I which is the inhibitor of actomyosin ATPase, Tn-T which contains the binding site for tropomyosin and Tn-C. The binding of calcium to Tn-C abolishes the inhibitory action of Tn on actin filaments. This Branchiostoma lanceolatum (Common lancelet) protein is Troponin C.